Consider the following 550-residue polypeptide: Thermosome subunit (550 aa).

Positions 529–550 are disordered; sequence KEKEGEKGGGGSEDFSSSSDLD. Residues 541-550 show a composition bias toward low complexity; that stretch reads EDFSSSSDLD.

Belongs to the TCP-1 chaperonin family. In terms of assembly, forms an oligomeric complex of eight-membered rings.

Molecular chaperone; binds unfolded polypeptides in vitro, and has a weak ATPase activity. This Pyrococcus abyssi (strain GE5 / Orsay) protein is Thermosome subunit (ths).